Here is a 206-residue protein sequence, read N- to C-terminus: MVSGSGICSKRVVVDARHHMLGRLASITAKELLNGQKVVIVRCEEICLSGGLVRQKMKYMRFLRKRMNTKPSHGPIHFRAPSKIFWRTVRGMIPHKTKRGAAALARLKVYEGVPTPYDKIKRMVIPDALKVLRLQAGHKYCLLGRLSSEVGWNHYDTIKELETKRKERAHVVYERKKQLNKLRVKAEKVAEEKLGAQLDILAPVKY.

This sequence belongs to the universal ribosomal protein uL13 family.

The sequence is that of Large ribosomal subunit protein uL13w (RPL13AD) from Arabidopsis thaliana (Mouse-ear cress).